A 396-amino-acid chain; its full sequence is S-adenosylmethionine synthase 1 (396 aa).

Glutamate 13 serves as a coordination point for Mg(2+). Histidine 19 serves as a coordination point for ATP. Glutamate 47 is a K(+) binding site. Residues glutamate 60 and glutamine 103 each coordinate L-methionine. ATP is bound by residues 171 to 173, 239 to 242, aspartate 250, 256 to 257, alanine 273, lysine 277, and lysine 281; these read DGK, SGRF, and RK. Position 250 (aspartate 250) interacts with L-methionine. An L-methionine-binding site is contributed by lysine 281.

It belongs to the AdoMet synthase family. In terms of assembly, homotetramer. Requires Mn(2+) as cofactor. The cofactor is Mg(2+). Co(2+) serves as cofactor. It depends on K(+) as a cofactor.

It is found in the cytoplasm. It carries out the reaction L-methionine + ATP + H2O = S-adenosyl-L-methionine + phosphate + diphosphate. It participates in amino-acid biosynthesis; S-adenosyl-L-methionine biosynthesis; S-adenosyl-L-methionine from L-methionine: step 1/1. Catalyzes the formation of S-adenosylmethionine from methionine and ATP. The reaction comprises two steps that are both catalyzed by the same enzyme: formation of S-adenosylmethionine (AdoMet) and triphosphate, and subsequent hydrolysis of the triphosphate. May be involved in the synthesis of betain in response to abiotic stress such as high salinity. This is S-adenosylmethionine synthase 1 (SAMS1) from Beta vulgaris (Sugar beet).